Consider the following 334-residue polypeptide: MNTEATHDQNEAQTTGVRLRNAREQLGLSQQAVAERLCLKVSTVRDIEEDKAPSDLASTFLRGYIRSYARLVHVPEEELLPGLEKQAPLRAAKVAPMQSFSLGKRRKKRDGWLMSFTWLVLFVVVGLTGAWWWQNHKAQQEEITTMADQSTAELNADKDSGQSVPLDTRDATSQDTTPAQTAPAPATPVDSTAATQTPAPTAAATQNTVVAPSQANVDTAATSAAPAATETPSALPTSQAGVAAPAADPNALVMNFTADCWLEVTDATGKKLFSGMQRKDGNLNLTGQAPYKLKIGAPAAVQIQYQGKPVDLSRFIRTNQVARLTLNAEPTPAQ.

Residues 1–111 (MNTEATHDQN…LGKRRKKRDG (111 aa)) are Cytoplasmic-facing. An HTH cro/C1-type domain is found at 19–71 (LRNAREQLGLSQQAVAERLCLKVSTVRDIEEDKAPSDLASTFLRGYIRSYARL). The segment at residues 30–49 (QQAVAERLCLKVSTVRDIEE) is a DNA-binding region (H-T-H motif). A helical; Signal-anchor for type II membrane protein membrane pass occupies residues 112-132 (WLMSFTWLVLFVVVGLTGAWW). The Periplasmic portion of the chain corresponds to 133–334 (WQNHKAQQEE…TLNAEPTPAQ (202 aa)). The disordered stretch occupies residues 154 to 241 (LNADKDSGQS…PSALPTSQAG (88 aa)). Low complexity-rich tracts occupy residues 176 to 211 (TTPA…TVVA) and 219 to 241 (TAAT…SQAG).

It belongs to the RodZ family.

The protein localises to the cell inner membrane. In terms of biological role, cytoskeletal protein that is involved in cell-shape control through regulation of the length of the long axis. This chain is Cytoskeleton protein RodZ, found in Salmonella choleraesuis (strain SC-B67).